We begin with the raw amino-acid sequence, 561 residues long: Melanopsin-A (561 aa).

The Extracellular segment spans residues 1-34 (MRPSTDTMEADTAATHRNFITKVDVPDHAHYTVA). Residues 35 to 55 (FFVSVIGTLGVTGNALVQFAF) traverse the membrane as a helical segment. Topologically, residues 56–68 (YSNKKLRNLPNYF) are cytoplasmic. Residues 69–89 (IMNQAASDFLMAFTQSPFFFI) traverse the membrane as a helical segment. Residues 90–104 (NCLNREWIFGELGCK) are Extracellular-facing. A disulfide bridge connects residues Cys103 and Cys181. A helical transmembrane segment spans residues 105-125 (LYAFLGALFGITSMINLLAIS). The Cytoplasmic segment spans residues 126-148 (LDRYMVITRPLEAMKWNSKRRTT). The chain crosses the membrane as a helical span at residues 149 to 169 (IAILLVWLYSLAWSLAPLVGW). Residues 170–201 (SSYIPEGLRTSCTWDYVTYTASNRSYTMMLCC) lie on the Extracellular side of the membrane. Asn192 carries N-linked (GlcNAc...) asparagine glycosylation. The helical transmembrane segment at 202–222 (FVFFIPLAIISYCYLFMFLAI) threads the bilayer. At 223–255 (RKTSRDVERLGIQVRKSTIIRQKSIRTEWKLAK) the chain is on the cytoplasmic side. The chain crosses the membrane as a helical span at residues 256–276 (IAFVVIVVYVLSWSPYACVTM). Residues 277 to 291 (ISWSGHANILSPYSK) lie on the Extracellular side of the membrane. The chain crosses the membrane as a helical span at residues 292-312 (TVPAVIAKASTIYNPFIYAII). Position 299 is an N6-(retinylidene)lysine (Lys299). The Cytoplasmic portion of the chain corresponds to 313-561 (HQKYRKTLAD…EDSLEDNDVV (249 aa)). Disordered regions lie at residues 359–385 (AIRR…SYSS), 404–448 (ASFR…SATH), 479–503 (NGLS…SKSA), and 539–561 (SFTD…NDVV). The span at 371–385 (ASASKTAAGASSYSS) shows a compositional bias: low complexity. Acidic residues predominate over residues 550-561 (VDEDSLEDNDVV).

Belongs to the G-protein coupled receptor 1 family. Opsin subfamily. In terms of tissue distribution, expressed in retina and brain. Expressed in a subset of retinal horizontal cells as well as a small number of amacrine and retinal ganglion cells. Also expressed in a small population of neurons in the suprachiasmatic nucleus (SNC).

Its subcellular location is the cell membrane. Photoreceptor implicated in non-image-forming responses to light. The sequence is that of Melanopsin-A (opn4a) from Gadus morhua (Atlantic cod).